The primary structure comprises 253 residues: 5'/3'-nucleotidase SurE (253 aa).

A divalent metal cation contacts are provided by aspartate 8, aspartate 9, serine 39, and asparagine 92.

It belongs to the SurE nucleotidase family. Requires a divalent metal cation as cofactor.

The protein resides in the cytoplasm. The enzyme catalyses a ribonucleoside 5'-phosphate + H2O = a ribonucleoside + phosphate. It carries out the reaction a ribonucleoside 3'-phosphate + H2O = a ribonucleoside + phosphate. It catalyses the reaction [phosphate](n) + H2O = [phosphate](n-1) + phosphate + H(+). In terms of biological role, nucleotidase with a broad substrate specificity as it can dephosphorylate various ribo- and deoxyribonucleoside 5'-monophosphates and ribonucleoside 3'-monophosphates with highest affinity to 3'-AMP. Also hydrolyzes polyphosphate (exopolyphosphatase activity) with the preference for short-chain-length substrates (P20-25). Might be involved in the regulation of dNTP and NTP pools, and in the turnover of 3'-mononucleotides produced by numerous intracellular RNases (T1, T2, and F) during the degradation of various RNAs. This is 5'/3'-nucleotidase SurE from Klebsiella pneumoniae (strain 342).